The sequence spans 331 residues: Ferredoxin--NADP reductase 2 (331 aa).

Residues E37, Q45, Y50, V90, F124, D286, and T327 each contribute to the FAD site.

It belongs to the ferredoxin--NADP reductase type 2 family. In terms of assembly, homodimer. The cofactor is FAD.

The enzyme catalyses 2 reduced [2Fe-2S]-[ferredoxin] + NADP(+) + H(+) = 2 oxidized [2Fe-2S]-[ferredoxin] + NADPH. The chain is Ferredoxin--NADP reductase 2 from Listeria welshimeri serovar 6b (strain ATCC 35897 / DSM 20650 / CCUG 15529 / CIP 8149 / NCTC 11857 / SLCC 5334 / V8).